Reading from the N-terminus, the 203-residue chain is Imidazoleglycerol-phosphate dehydratase (203 aa).

This sequence belongs to the imidazoleglycerol-phosphate dehydratase family.

The protein resides in the cytoplasm. The enzyme catalyses D-erythro-1-(imidazol-4-yl)glycerol 3-phosphate = 3-(imidazol-4-yl)-2-oxopropyl phosphate + H2O. The protein operates within amino-acid biosynthesis; L-histidine biosynthesis; L-histidine from 5-phospho-alpha-D-ribose 1-diphosphate: step 6/9. This chain is Imidazoleglycerol-phosphate dehydratase, found in Synechococcus sp. (strain RCC307).